The following is a 334-amino-acid chain: N-acetyl-gamma-glutamyl-phosphate reductase (334 aa).

C154 is a catalytic residue.

It belongs to the NAGSA dehydrogenase family. Type 1 subfamily.

Its subcellular location is the cytoplasm. It catalyses the reaction N-acetyl-L-glutamate 5-semialdehyde + phosphate + NADP(+) = N-acetyl-L-glutamyl 5-phosphate + NADPH + H(+). It participates in amino-acid biosynthesis; L-arginine biosynthesis; N(2)-acetyl-L-ornithine from L-glutamate: step 3/4. Functionally, catalyzes the NADPH-dependent reduction of N-acetyl-5-glutamyl phosphate to yield N-acetyl-L-glutamate 5-semialdehyde. The protein is N-acetyl-gamma-glutamyl-phosphate reductase of Escherichia coli O157:H7.